The primary structure comprises 280 residues: Shikimate dehydrogenase (NADP(+)) (280 aa).

Shikimate contacts are provided by residues 15 to 17 (SMS) and Thr-62. Lys-66 acts as the Proton acceptor in catalysis. Glu-78 is an NADP(+) binding site. Shikimate contacts are provided by Asn-87 and Asp-102. Residues 127–131 (GAGGA), 151–156 (NRTLEK), and Ile-219 contribute to the NADP(+) site. Tyr-221 is a shikimate binding site. An NADP(+)-binding site is contributed by Gly-242.

This sequence belongs to the shikimate dehydrogenase family. As to quaternary structure, homodimer.

The catalysed reaction is shikimate + NADP(+) = 3-dehydroshikimate + NADPH + H(+). It participates in metabolic intermediate biosynthesis; chorismate biosynthesis; chorismate from D-erythrose 4-phosphate and phosphoenolpyruvate: step 4/7. Functionally, involved in the biosynthesis of the chorismate, which leads to the biosynthesis of aromatic amino acids. Catalyzes the reversible NADPH linked reduction of 3-dehydroshikimate (DHSA) to yield shikimate (SA). The protein is Shikimate dehydrogenase (NADP(+)) of Bacillus subtilis (strain 168).